The sequence spans 597 residues: Spastin (597 aa).

Over methionine 1–phenylalanine 20 the chain is Cytoplasmic. Positions leucine 21–tryptophan 37 form an intramembrane region, helical. At serine 38–alanine 597 the chain is on the cytoplasmic side. The segment at arginine 56–glycine 80 is disordered. The 78-residue stretch at histidine 91 to leucine 168 folds into the MIT domain. Residues serine 193–valine 289 are disordered. The span at serine 214 to arginine 231 shows a compositional bias: polar residues. The segment covering serine 232 to serine 252 has biased composition (low complexity).

It belongs to the AAA ATPase family. Spastin subfamily. Homohexamer. The homohexamer is stabilized by ATP-binding. The homohexamer may adopt a ring conformation through which microtubules pass prior to being severed. Interacts with microtubules.

It localises to the membrane. The protein resides in the cytoplasm. It is found in the cytoskeleton. Its subcellular location is the microtubule organizing center. The protein localises to the centrosome. The enzyme catalyses n ATP + n H2O + a microtubule = n ADP + n phosphate + (n+1) alpha/beta tubulin heterodimers.. Its function is as follows. ATP-dependent microtubule severing protein. Microtubule severing may promote reorganization of cellular microtubule arrays and the release of microtubules from the microtubule organizing center following nucleation. The polypeptide is Spastin (Nematostella vectensis (Starlet sea anemone)).